The primary structure comprises 470 residues: MNAATKLPGELGPIHFVGIGGIGMSGIAEVLMTLGYRVQGSDAKASKITERLVSLGATFFEGQRAGNLGEAAVVVISSAIKKGNPELEEARLRGLPVVRRAEMLAELMRMRSNIAIAGTHGKTTTTTMVATLLDKGGFDPTVINGGVIHAYGSNARAGAGEWMVVEADESDGSFNRLPATIAIVTNIDPEHMEHWGSFDALRKGFYDFVTNIPFYGLAVCCTDHAEVQALVGRVTDRRIVTFGFNAQADVRAINLRYENGIAHFDVALQSEGAGHVIEGMSLPMPGDHNVSNALAAVAVARHLGMKKDEIREALAAFGGVNRRFTKVGEVGGVTIIDDYGHHPVEIAAVLKAARQAVKGRVIAVHQPHRYSRLHSLFDDFCTCFNEADVVAIAEVYAAGEDPIPGAGRDDLVAGLIAHGHRHARAILCEDDLERLVREQARPGDMVVCLGAGTISAWANNLPARLMGKAA.

An ATP-binding site is contributed by 118–124 (GTHGKTT).

The protein belongs to the MurCDEF family.

It localises to the cytoplasm. It catalyses the reaction UDP-N-acetyl-alpha-D-muramate + L-alanine + ATP = UDP-N-acetyl-alpha-D-muramoyl-L-alanine + ADP + phosphate + H(+). It participates in cell wall biogenesis; peptidoglycan biosynthesis. Functionally, cell wall formation. In Cereibacter sphaeroides (strain ATCC 17029 / ATH 2.4.9) (Rhodobacter sphaeroides), this protein is UDP-N-acetylmuramate--L-alanine ligase.